Reading from the N-terminus, the 237-residue chain is DNA repair protein RecO (237 aa).

Belongs to the RecO family.

Involved in DNA repair and RecF pathway recombination. The protein is DNA repair protein RecO of Rickettsia rickettsii (strain Iowa).